Here is a 324-residue protein sequence, read N- to C-terminus: NADH-ubiquinone oxidoreductase chain 1 (324 aa).

The next 8 helical transmembrane spans lie at 9–29 (LINP…LTLI), 75–95 (FLFL…WAPM), 106–126 (LGIL…LGSG), 146–166 (ISYE…SGGY), 177–197 (SIWL…STLA), 228–248 (LFFL…AVLF), 259–279 (ELTT…FLWV), and 299–319 (FLPL…ALAG).

The protein belongs to the complex I subunit 1 family.

It is found in the mitochondrion inner membrane. It carries out the reaction a ubiquinone + NADH + 5 H(+)(in) = a ubiquinol + NAD(+) + 4 H(+)(out). Functionally, core subunit of the mitochondrial membrane respiratory chain NADH dehydrogenase (Complex I) that is believed to belong to the minimal assembly required for catalysis. Complex I functions in the transfer of electrons from NADH to the respiratory chain. The immediate electron acceptor for the enzyme is believed to be ubiquinone. This chain is NADH-ubiquinone oxidoreductase chain 1 (MT-ND1), found in Carassius auratus (Goldfish).